Here is a 91-residue protein sequence, read N- to C-terminus: Small ribosomal subunit protein bS20 (91 aa).

The tract at residues 1–26 (MANLKSSKKDIRRTARRKERNGEDRT) is disordered.

This sequence belongs to the bacterial ribosomal protein bS20 family.

Functionally, binds directly to 16S ribosomal RNA. The protein is Small ribosomal subunit protein bS20 of Leptospira biflexa serovar Patoc (strain Patoc 1 / Ames).